The following is a 235-amino-acid chain: Zinc transporter ZIP9 (235 aa).

A glycan (N-linked (GlcNAc...) asparagine) is linked at N2. Helical transmembrane passes span S11 to T31, T75 to A95, L104 to F124, and H138 to S158. N-linked (GlcNAc...) asparagine glycosylation is present at N169. Helical transmembrane passes span G172 to P192 and L214 to Q234.

Belongs to the ZIP transporter (TC 2.A.5) family.

The protein localises to the golgi apparatus. It is found in the trans-Golgi network membrane. The protein resides in the cell membrane. Its subcellular location is the cytoplasm. It localises to the perinuclear region. The protein localises to the mitochondrion. It is found in the nucleus. The catalysed reaction is Zn(2+)(in) = Zn(2+)(out). Functionally, transports zinc ions across cell and organelle membranes into the cytoplasm and regulates intracellular zinc homeostasis. Participates in the zinc ions efflux out of the secretory compartments. Regulates intracellular zinc level, resulting in the enhancement of AKT1 and MAPK3/MAPK1 (Erk1/2) phosphorylation in response to the BCR activation. Also functions as a membrane androgen receptor that mediates, through a G protein, the non-classical androgen signaling pathway, characterized by the activation of MAPK3/MAPK1 (Erk1/2) and transcription factors CREB1 or ATF1. This pathway contributes to CLDN1 and CLDN5 expression and tight junction formation between adjacent Sertoli cells. Mediates androgen-induced vascular endothelial cell proliferation through activation of an inhibitory G protein leading to the AKT1 and MAPK3/MAPK1 (Erk1/2) activation which in turn modulate inhibition (phosphorylation) of GSK3B and CCND1 transcription. Moreover, has dual functions as a membrane-bound androgen receptor and as an androgen-dependent zinc transporter both of which are mediated through an inhibitory G protein (Gi) that mediates both MAP kinase and zinc signaling leading to the androgen-dependent apoptotic process. This Macaca fascicularis (Crab-eating macaque) protein is Zinc transporter ZIP9.